We begin with the raw amino-acid sequence, 322 residues long: Acetylglutamate kinase (322 aa).

Residues Gly-89–Gly-90, Arg-111, and Asn-217 contribute to the substrate site.

The protein belongs to the acetylglutamate kinase family. ArgB subfamily.

It localises to the cytoplasm. It catalyses the reaction N-acetyl-L-glutamate + ATP = N-acetyl-L-glutamyl 5-phosphate + ADP. Its pathway is amino-acid biosynthesis; L-arginine biosynthesis; N(2)-acetyl-L-ornithine from L-glutamate: step 2/4. Catalyzes the ATP-dependent phosphorylation of N-acetyl-L-glutamate. The polypeptide is Acetylglutamate kinase (Ehrlichia ruminantium (strain Welgevonden)).